We begin with the raw amino-acid sequence, 408 residues long: Na(+)-translocating NADH-quinone reductase subunit F (408 aa).

The helical transmembrane segment at 6-26 threads the bilayer; sequence IILGVVMFTAIVLALVAIILA. A 2Fe-2S ferredoxin-type domain is found at 35–127; that stretch reads GDVTIRINGE…DMDVEVPEEV (93 aa). [2Fe-2S] cluster is bound by residues Cys70, Cys76, Cys79, and Cys111. One can recognise an FAD-binding FR-type domain in the interval 130–270; it reads VKAWECTVES…YGPFGEFFAK (141 aa).

Belongs to the NqrF family. In terms of assembly, composed of six subunits; NqrA, NqrB, NqrC, NqrD, NqrE and NqrF. [2Fe-2S] cluster is required as a cofactor. FAD serves as cofactor.

The protein resides in the cell inner membrane. The catalysed reaction is a ubiquinone + n Na(+)(in) + NADH + H(+) = a ubiquinol + n Na(+)(out) + NAD(+). Its function is as follows. NQR complex catalyzes the reduction of ubiquinone-1 to ubiquinol by two successive reactions, coupled with the transport of Na(+) ions from the cytoplasm to the periplasm. The first step is catalyzed by NqrF, which accepts electrons from NADH and reduces ubiquinone-1 to ubisemiquinone by a one-electron transfer pathway. The chain is Na(+)-translocating NADH-quinone reductase subunit F from Marinomonas sp. (strain MWYL1).